The following is a 243-amino-acid chain: MKIDFLTLFPEMFQGVLGSSILQKAQEKEAVRFDVINFRAFSDNKHQTVDDYPYGGGAGMVLKPQPVFDAVEKLTAGTDAKPRIILVCPQGERYTQKKAEELAQEEHLMFICGHYEGYDERIREHLVTDEISIGDFVLTGGELPAMMIADSVVRLLPGVLGKEASHVEDSFSTGLLEHPHYTRPADYRGLKVPETLLSGNHAKIQKWRNKESIRRTFLRRPDLLKNYPLTDEQRKWISEWENE.

Residues Gly113 and Ile133–Leu138 each bind S-adenosyl-L-methionine.

The protein belongs to the RNA methyltransferase TrmD family. As to quaternary structure, homodimer.

The protein localises to the cytoplasm. The enzyme catalyses guanosine(37) in tRNA + S-adenosyl-L-methionine = N(1)-methylguanosine(37) in tRNA + S-adenosyl-L-homocysteine + H(+). In terms of biological role, specifically methylates guanosine-37 in various tRNAs. This is tRNA (guanine-N(1)-)-methyltransferase from Bacillus velezensis (strain DSM 23117 / BGSC 10A6 / LMG 26770 / FZB42) (Bacillus amyloliquefaciens subsp. plantarum).